We begin with the raw amino-acid sequence, 461 residues long: Cysteine--tRNA ligase (461 aa).

Position 28 (C28) interacts with Zn(2+). The 'HIGH' region signature appears at 30–40; sequence ITVYDLCHIGH. Zn(2+) contacts are provided by C209, H234, and E238. Positions 266-270 match the 'KMSKS' region motif; it reads KMSKS. K269 serves as a coordination point for ATP.

The protein belongs to the class-I aminoacyl-tRNA synthetase family. Monomer. It depends on Zn(2+) as a cofactor.

It localises to the cytoplasm. The catalysed reaction is tRNA(Cys) + L-cysteine + ATP = L-cysteinyl-tRNA(Cys) + AMP + diphosphate. The chain is Cysteine--tRNA ligase from Escherichia coli O127:H6 (strain E2348/69 / EPEC).